A 157-amino-acid polypeptide reads, in one-letter code: S-ribosylhomocysteine lyase (157 aa).

Residues H53, H57, and C124 each contribute to the Fe cation site.

The protein belongs to the LuxS family. As to quaternary structure, homodimer. It depends on Fe cation as a cofactor.

The catalysed reaction is S-(5-deoxy-D-ribos-5-yl)-L-homocysteine = (S)-4,5-dihydroxypentane-2,3-dione + L-homocysteine. In terms of biological role, involved in the synthesis of autoinducer 2 (AI-2) which is secreted by bacteria and is used to communicate both the cell density and the metabolic potential of the environment. The regulation of gene expression in response to changes in cell density is called quorum sensing. Catalyzes the transformation of S-ribosylhomocysteine (RHC) to homocysteine (HC) and 4,5-dihydroxy-2,3-pentadione (DPD). This Borreliella afzelii (strain PKo) (Borrelia afzelii) protein is S-ribosylhomocysteine lyase.